The primary structure comprises 164 residues: UPF0114 protein YqhA (164 aa).

Helical transmembrane passes span 15–35 (LLAP…LKFF), 53–73 (LILV…LVMV), and 136–156 (LMWY…MGYL).

Belongs to the UPF0114 family.

It is found in the cell membrane. The chain is UPF0114 protein YqhA from Shigella dysenteriae serotype 1 (strain Sd197).